The sequence spans 604 residues: ATP-dependent RNA helicase DBP1 (604 aa).

The tract at residues 1–79 (MSDGSGRYVP…RASGSGGFGG (79 aa)) is disordered. Over residues 32 to 45 (SRYSGNGFFSSPNR) the composition is skewed to polar residues. Positions 138–166 (TEFKSPPLDELLLENVELANFSKPTPVQK) match the Q motif motif. The Helicase ATP-binding domain occupies 169 to 358 (IPIVTKNRDL…RDFLKDYIFL (190 aa)). 182 to 189 (AQTGSGKT) is a binding site for ATP. Residues 302-305 (DEAD) carry the DEAD box motif. The Helicase C-terminal domain occupies 386-529 (LLDILINEID…EVPQFLVNMV (144 aa)). A disordered region spans residues 535 to 591 (FGRGGRNSRTGSNRGRGSNTRDYRHSNKDDWGSLGSSRRGFRSNDNRGFGNNWGSSS). Positions 541–552 (NSRTGSNRGRGS) are enriched in low complexity. Over residues 553–565 (NTRDYRHSNKDDW) the composition is skewed to basic and acidic residues.

It belongs to the DEAD box helicase family. DDX3/DED1 subfamily.

The protein localises to the cytoplasm. It catalyses the reaction ATP + H2O = ADP + phosphate + H(+). In terms of biological role, ATP-binding RNA helicase involved in translation initiation. Remodels RNA in response to ADP and ATP concentrations by facilitating disruption, but also formation of RNA duplexes. Redundant to DED1, may be required in conditions in which DED1 expression is decreased. The sequence is that of ATP-dependent RNA helicase DBP1 (DBP1) from Candida glabrata (strain ATCC 2001 / BCRC 20586 / JCM 3761 / NBRC 0622 / NRRL Y-65 / CBS 138) (Yeast).